The chain runs to 118 residues: Protein TusC (118 aa).

The protein belongs to the DsrF/TusC family. Heterohexamer, formed by a dimer of trimers. The hexameric TusBCD complex contains 2 copies each of TusB, TusC and TusD. The TusBCD complex interacts with TusE.

It is found in the cytoplasm. Functionally, part of a sulfur-relay system required for 2-thiolation of 5-methylaminomethyl-2-thiouridine (mnm(5)s(2)U) at tRNA wobble positions. The protein is Protein TusC of Salmonella typhimurium (strain LT2 / SGSC1412 / ATCC 700720).